The chain runs to 360 residues: POU domain, class 5, transcription factor 1 (360 aa).

Disordered regions lie at residues 1 to 51 (MAGH…GPGV) and 88 to 114 (GGLE…SPEP). A 9aaTAD motif is present at residues 4 to 12 (HLTSDFAFS). At Ser111 the chain carries Phosphoserine; by MAPK. A Glycyl lysine isopeptide (Lys-Gly) (interchain with G-Cter in SUMO) cross-link involves residue Lys123. The 75-residue stretch at 138–212 (DIKALQKELE…LLQKWVEEAD (75 aa)) folds into the POU-specific domain. The DNA site is built by Arg157 and Gln164. DNA-binding regions lie at residues 180-186 (SQTTICR) and 193-196 (SFKN). Positions 230-289 (RKRKRTSIENRVRGNLENLFLQCPKPTLQQISHIAQQLGLEKDVVRVWFCNRRQKGKRSS) form a DNA-binding region, homeobox. Phosphothreonine is present on Thr235. Residues Ser236, Ser289, Ser290, and Ser355 each carry the phosphoserine modification.

Belongs to the POU transcription factor family. Class-5 subfamily. Interacts with PKM. Interacts with WWP2. Interacts with UBE2I and ZSCAN10. Interacts with PCGF1. Interacts with ESRRB; recruits ESRRB near the POU5F1-SOX2 element in the NANOG proximal promoter; the interaction is DNA independent. Interacts with ZNF322. Interacts with MAPK8 and MAPK9; the interaction allows MAPK8 and MAPK9 to phosphorylate POU5F1 on Ser-355. Interacts (when phosphorylated on Ser-355) with FBXW8. Interacts with FBXW4. Interacts with SOX2 and SOX15; binds synergistically with either SOX2 or SOX15 to DNA. Interacts with DDX56. Sumoylation enhances the protein stability, DNA binding and transactivation activity. Sumoylation is required for enhanced YES1 expression. In terms of processing, ubiquitinated; undergoes 'Lys-63'-linked polyubiquitination by WWP2 leading to proteasomal degradation. Post-translationally, ERK1/2-mediated phosphorylation at Ser-111 promotes nuclear exclusion and proteasomal degradation. Phosphorylation at Thr-235 and Ser-236 decrease DNA-binding and alters ability to activate transcription.

The protein localises to the cytoplasm. It is found in the nucleus. Its function is as follows. Transcription factor that binds to the octamer motif (5'-ATTTGCAT-3'). Forms a trimeric complex with SOX2 or SOX15 on DNA and controls the expression of a number of genes involved in embryonic development such as YES1, FGF4, UTF1 and ZFP206. Critical for early embryogenesis and for embryonic stem cell pluripotency. The sequence is that of POU domain, class 5, transcription factor 1 (POU5F1) from Pan troglodytes (Chimpanzee).